The chain runs to 529 residues: MPVMAPTASLLLSPRPLPASRRVPSLPALSASGRLRLRRARADTRLRVAAPPSVPGEADQAPGETEPSTSSADEKFVWRDHWYPVSLVEDLDPSVPTPFQLLNRDLVIWKDPKSGEWVALDDRCPHRLAPLSEGRIDETGCLQCSYHGWSFDGSGACTRIPQAAPEGPEAKAVRSPKACAIKFPTLVSQGLLFVWPDENGWEKATATKPPMLPKEFEDPAFSTVTIQRDLYYGYDTLMENVSDPSHIEFAHHKVTGRRDRARPLPFKMESSGAWGYSGSNSGNPRISATFVAPCYALNKIEIDTKLPIFGDQKWVIWICSFNIPMAPGKTRSIVCSARNFFQFSMPGKAWWQLVPRWYEHWTSNLVYDGDMIVLQGQEKIFLSASKESSADINQQYTKITFTPTQADRFVLAFRAWLRKFGNSQPDWFGNPSQEVLPSTVLSKREMLDRYEQHTLKCSSCKGAYNAFQTLQKVFMGATVAFCATAGIPADVQFRLLLAAAALVSAAVAYAFYTLQKNFVFVDYVHAEID.

Disordered regions lie at residues 1–24 and 46–72; these read MPVM…RRVP and LRVA…TSSA. Residues 1–47 constitute a chloroplast transit peptide; the sequence is MPVMAPTASLLLSPRPLPASRRVPSLPALSASGRLRLRRARADTRLR. The Rieske domain occupies 82–194; it reads WYPVSLVEDL…TLVSQGLLFV (113 aa). The [2Fe-2S] cluster site is built by C124, H126, C144, and H147.

[2Fe-2S] cluster is required as a cofactor. In terms of tissue distribution, expressed in leaves. Expressed at low levels in roots, stems, panicles and seeds.

The protein localises to the plastid. The protein resides in the chloroplast. It carries out the reaction pheophorbide a + 2 reduced [2Fe-2S]-[ferredoxin] + O2 + 2 H(+) = red chlorophyll catabolite + 2 oxidized [2Fe-2S]-[ferredoxin]. It functions in the pathway porphyrin-containing compound metabolism; chlorophyll degradation. Catalyzes the key reaction of chlorophyll catabolism, porphyrin macrocycle cleavage of pheophorbide a (pheide a) to a primary fluorescent catabolite (pFCC). Works in a two-step reaction with red chlorophyll catabolite reductase (RCCR). Creates the intermediate RCC through the opening of the porphyrin macrocycle by the introduction of one atom of molecular oxygen at the alpha-methine bridge. Seems to be specific for pheide a. Belongs to the chlorophyll catabolic enzymes (CCEs). May play a role in senescence and response to wounding. In Oryza sativa subsp. japonica (Rice), this protein is Pheophorbide a oxygenase, chloroplastic.